The chain runs to 174 residues: Neuromedin-U (174 aa).

An N-terminal signal peptide occupies residues 1 to 37 (MSRAANRRPGLSAGQLAAATASPLLSLLLLLACCADA). A propeptide spanning residues 38 to 105 (CRGTPISPQR…EQTEKDNAKR (68 aa)) is cleaved from the precursor. Methionine 141 is modified (methionine sulfoxide; partial). An Asparagine amide modification is found at asparagine 166. A propeptide spanning residues 170-174 (STSFI) is cleaved from the precursor.

The protein belongs to the NmU family. As to expression, expressed throughout the gastrointestinal tract with highest levels in the duodenum and jejunum. Low levels in spinal cord, hypothalamus, and stomach. Neuromedin-U-23: Expressed in the small intestine and the pituitary gland (at protein level). Neuromedin precursor-related peptides: Expressed in pituitary gland and small intestine (at protein level).

Its subcellular location is the secreted. In terms of biological role, ligand for receptors NMUR1 and NMUR2. Receptor-binding is very tight if not irreversible and triggers an increase in the cytosolic Ca(2+) concentration. Stimulates muscle contractions of specific regions of the gastrointestinal tract. In rat, NMU stimulates contractions of stomach circular muscle. Its function is as follows. Does not function as a ligand for either NMUR1 or NMUR2. Indirectly induces prolactin release although its potency is much lower than that of neuromedin precursor-related peptide 36. Functionally, does not function as a ligand for either NMUR1 or NMUR2. Indirectly induces prolactin release from lactotroph cells in the pituitary gland, probably via the hypothalamic dopaminergic system. This Rattus norvegicus (Rat) protein is Neuromedin-U (Nmu).